Consider the following 422-residue polypeptide: MNNLEIFKESEKYMPGGVNSPVRAFSNASINPPIIKKGLGSRIVDEEGKEYIDFVASWGPMILGHNDPEVVEAIQNTVEDAISFGAPTELELKLAKHMVETLDNIDMVRMVNSGTEATMSAIKLARGYTRRDRIIKFAGCYHGHFDGFLVEAGSGVLTERIPGSPGVPKGSIENTLIAEYNHIDTVEALFEKYPEEIAAIIIEPIAGNMGTIPAKTEFLQRLREICTKYGALLIFDEVMTGFRVAYKGAQSRYGVKPDLTTYAKIMGGGLPSGAYGGRRDIMEKLSPIGPVYQAGTMSGNPVVMAAGYTTLRKLYNNPSYYEHMEKIGAELQKGIEIVAKEKGLPVVVNRCGAMLTPFFSKRDKVADYEDAKSSDTELYGRFFEHMIKSGIYIAPSQFEAMFIGVKHDIYEVERFLEAMRKF.

The residue at position 264 (K264) is an N6-(pyridoxal phosphate)lysine.

It belongs to the class-III pyridoxal-phosphate-dependent aminotransferase family. HemL subfamily. As to quaternary structure, homodimer. Pyridoxal 5'-phosphate is required as a cofactor.

It is found in the cytoplasm. The enzyme catalyses (S)-4-amino-5-oxopentanoate = 5-aminolevulinate. It functions in the pathway porphyrin-containing compound metabolism; protoporphyrin-IX biosynthesis; 5-aminolevulinate from L-glutamyl-tRNA(Glu): step 2/2. The chain is Glutamate-1-semialdehyde 2,1-aminomutase from Clostridium tetani (strain Massachusetts / E88).